Consider the following 141-residue polypeptide: uncharacterized protein (141 aa).

The helical transmembrane segment at 114 to 134 (ILFTCYIQSFSLLISNFFIAI) threads the bilayer.

The protein resides in the membrane. This is an uncharacterized protein from Schizosaccharomyces pombe (strain 972 / ATCC 24843) (Fission yeast).